The chain runs to 102 residues: NADH-quinone oxidoreductase subunit K (102 aa).

The next 3 membrane-spanning stretches (helical) occupy residues 3-23, 31-51, and 66-86; these read IGLT…AFGI, IVLL…LVAF, and FILT…VVYF.

It belongs to the complex I subunit 4L family. NDH-1 is composed of 14 different subunits. Subunits NuoA, H, J, K, L, M, N constitute the membrane sector of the complex.

It is found in the cell inner membrane. It carries out the reaction a quinone + NADH + 5 H(+)(in) = a quinol + NAD(+) + 4 H(+)(out). Functionally, NDH-1 shuttles electrons from NADH, via FMN and iron-sulfur (Fe-S) centers, to quinones in the respiratory chain. The immediate electron acceptor for the enzyme in this species is believed to be ubiquinone. Couples the redox reaction to proton translocation (for every two electrons transferred, four hydrogen ions are translocated across the cytoplasmic membrane), and thus conserves the redox energy in a proton gradient. This chain is NADH-quinone oxidoreductase subunit K, found in Rhodospirillum centenum (strain ATCC 51521 / SW).